The sequence spans 345 residues: MCSVLAIALVVALLGDMHPGVKSSTTSAVTSPSNTTVTSTTSISTSNNVTSAVTTTVQTSTSSASTSVIATTQKEGHLYTVNCEASYSHDQVSLNATCKVILLNNTKNPDILSVTCYARTDCKGPFTQVGYLSAFPPDNEGKLHLSYNATAQELLISGLRPQETTEYTCSFFSWGRHHNATWDLFTYPIYAVYGTRLNATTMRVRVLLQEHEHCLLNGSSLYHPNSTVHLHQGNQLIPPWNISNVTYNGQRLREFVFYLNGTYTVVRLHVQIAGRSFTTTYVFIKSDPLFEDRLLAYGVLAFLVFMVIILLYVTYMLARRRDWSYKRLEEPVEEKKHPVPYFKQW.

Residues 1-23 (MCSVLAIALVVALLGDMHPGVKS) form the signal peptide. Positions 23 to 42 (SSTTSAVTSPSNTTVTSTTS) are disordered. At 24-294 (STTSAVTSPS…KSDPLFEDRL (271 aa)) the chain is on the virion surface side. 12 N-linked (GlcNAc...) asparagine; by host glycosylation sites follow: Asn-34, Asn-48, Asn-95, Asn-104, Asn-148, Asn-179, Asn-198, Asn-217, Asn-225, Asn-241, Asn-244, and Asn-260. The region spanning 91–190 (QVSLNATCKV…TWDLFTYPIY (100 aa)) is the Ig-like V-type domain. A helical transmembrane segment spans residues 295-317 (LAYGVLAFLVFMVIILLYVTYML). Over 318–345 (ARRRDWSYKRLEEPVEEKKHPVPYFKQW) the chain is Intravirion.

It is found in the virion membrane. In terms of biological role, serves as a receptor for the Fc part of human IgG. May thus be involved in interfering with host Ig-mediated immune responses. This is Viral Fc-gamma receptor-like protein UL119 (UL119/UL118) from Human cytomegalovirus (strain AD169) (HHV-5).